The chain runs to 511 residues: Bifunctional purine biosynthesis protein PurH (511 aa).

In terms of domain architecture, MGS-like spans 1–145; the sequence is MKKRALVSVS…KNHKFVSVIV (145 aa).

The protein belongs to the PurH family.

It carries out the reaction (6R)-10-formyltetrahydrofolate + 5-amino-1-(5-phospho-beta-D-ribosyl)imidazole-4-carboxamide = 5-formamido-1-(5-phospho-D-ribosyl)imidazole-4-carboxamide + (6S)-5,6,7,8-tetrahydrofolate. The enzyme catalyses IMP + H2O = 5-formamido-1-(5-phospho-D-ribosyl)imidazole-4-carboxamide. The protein operates within purine metabolism; IMP biosynthesis via de novo pathway; 5-formamido-1-(5-phospho-D-ribosyl)imidazole-4-carboxamide from 5-amino-1-(5-phospho-D-ribosyl)imidazole-4-carboxamide (10-formyl THF route): step 1/1. It functions in the pathway purine metabolism; IMP biosynthesis via de novo pathway; IMP from 5-formamido-1-(5-phospho-D-ribosyl)imidazole-4-carboxamide: step 1/1. The chain is Bifunctional purine biosynthesis protein PurH from Bacillus cereus (strain 03BB102).